The following is a 270-amino-acid chain: Myelin protein zero-like protein 1 (270 aa).

The signal sequence occupies residues 1–35; it reads MAEAVGAVTLIAAPARRRWLWSALAAMLGLLTARI. The Ig-like V-type domain maps to 36 to 151; sequence SALEVHTPKE…DIVVRPGQIR (116 aa). Residues 36–162 are Extracellular-facing; that stretch reads SALEVHTPKE…HVVEIDNLLV (127 aa). N-linked (GlcNAc...) asparagine glycans are attached at residues N50 and N130. Residues C58 and C135 are joined by a disulfide bond. The helical transmembrane segment at 163–183 threads the bilayer; that stretch reads FLVWVVVGTVTAVVLGLTLLI. The Cytoplasmic portion of the chain corresponds to 184 to 270; it reads SLVLVVLYRR…SVVYADIRKD (87 aa). Residues 201–257 are disordered; sequence TGCSTSERLSPVKQAPRKCPSDTEGLVKSPPSAGSHQGPVIYAQLDHSGGHHSGKIN. A phosphoserine mark is found at S204, S206, S210, and S221. The ITIM motif 1 motif lies at 240-245; it reads VIYAQL. Y242 is modified (phosphotyrosine). S261 is modified (phosphoserine). The short motif at 262-267 is the ITIM motif 2 element; that stretch reads VVYADI. The residue at position 264 (Y264) is a Phosphotyrosine.

The protein belongs to the myelin P0 protein family. In terms of assembly, interacts with phosphorylated PTPN11/SHP-2. Post-translationally, phosphorylated on tyrosine residues upon stimulation with pervanadate and concanavalin-A (ConA). Phosphorylation at Tyr-242 and Tyr-264 is required for interaction with PTPN11/SHP-2. Dephosphorylated by PTPN11/SHP-2 (in vitro). N-glycosylated.

Its subcellular location is the membrane. Functionally, cell surface receptor, which is involved in signal transduction processes. Recruits PTPN11/SHP-2 to the cell membrane and is a putative substrate of PTPN11/SHP-2. Is a major receptor for concanavalin-A (ConA) and is involved in cellular signaling induced by ConA, which probably includes Src family tyrosine-protein kinases. May be involved in regulation of integrin-mediated cell motility. In Rattus norvegicus (Rat), this protein is Myelin protein zero-like protein 1 (Mpzl1).